We begin with the raw amino-acid sequence, 306 residues long: Non-specific ribonucleoside hydrolase RihC (306 aa).

H235 is an active-site residue.

This sequence belongs to the IUNH family. RihC subfamily.

Hydrolyzes both purine and pyrimidine ribonucleosides with a broad-substrate specificity. This Salmonella paratyphi C (strain RKS4594) protein is Non-specific ribonucleoside hydrolase RihC.